We begin with the raw amino-acid sequence, 71 residues long: ATP synthase subunit c (71 aa).

2 helical membrane-spanning segments follow: residues 5 to 25 (AIGI…AIIV) and 47 to 67 (FIGA…AFLL).

It belongs to the ATPase C chain family. F-type ATPases have 2 components, F(1) - the catalytic core - and F(0) - the membrane proton channel. F(1) has five subunits: alpha(3), beta(3), gamma(1), delta(1), epsilon(1). F(0) has three main subunits: a(1), b(2) and c(10-14). The alpha and beta chains form an alternating ring which encloses part of the gamma chain. F(1) is attached to F(0) by a central stalk formed by the gamma and epsilon chains, while a peripheral stalk is formed by the delta and b chains.

The protein resides in the cell membrane. F(1)F(0) ATP synthase produces ATP from ADP in the presence of a proton or sodium gradient. F-type ATPases consist of two structural domains, F(1) containing the extramembraneous catalytic core and F(0) containing the membrane proton channel, linked together by a central stalk and a peripheral stalk. During catalysis, ATP synthesis in the catalytic domain of F(1) is coupled via a rotary mechanism of the central stalk subunits to proton translocation. Its function is as follows. Key component of the F(0) channel; it plays a direct role in translocation across the membrane. A homomeric c-ring of between 10-14 subunits forms the central stalk rotor element with the F(1) delta and epsilon subunits. The polypeptide is ATP synthase subunit c (Shouchella clausii (strain KSM-K16) (Alkalihalobacillus clausii)).